Reading from the N-terminus, the 103-residue chain is Cycloviolacin-O9 (103 aa).

An N-terminal signal peptide occupies residues 1–9 (AAFALPAFA). A propeptide spanning residues 10-69 (SFEKDVITPAALEAVLNRKAPLYNIMMENDAILNVIANVKTVISNPVLEEALLKTNHGVN) is cleaved from the precursor. Residues 70–99 (GIPCGESCVWIPCLTSAVGCSCKSKVCYRN) constitute a cross-link (cyclopeptide (Gly-Asn)). 3 disulfides stabilise this stretch: C73–C89, C77–C91, and C82–C96. Residues 100 to 103 (SLDN) constitute a propeptide that is removed on maturation.

In terms of processing, this is a cyclic peptide.

Functionally, probably participates in a plant defense mechanism. In Viola biflora (Yellow wood violet), this protein is Cycloviolacin-O9.